A 366-amino-acid chain; its full sequence is S-adenosylmethionine:tRNA ribosyltransferase-isomerase (366 aa).

The protein belongs to the QueA family. In terms of assembly, monomer.

The protein localises to the cytoplasm. It carries out the reaction 7-aminomethyl-7-carbaguanosine(34) in tRNA + S-adenosyl-L-methionine = epoxyqueuosine(34) in tRNA + adenine + L-methionine + 2 H(+). The protein operates within tRNA modification; tRNA-queuosine biosynthesis. Functionally, transfers and isomerizes the ribose moiety from AdoMet to the 7-aminomethyl group of 7-deazaguanine (preQ1-tRNA) to give epoxyqueuosine (oQ-tRNA). The sequence is that of S-adenosylmethionine:tRNA ribosyltransferase-isomerase from Bradyrhizobium diazoefficiens (strain JCM 10833 / BCRC 13528 / IAM 13628 / NBRC 14792 / USDA 110).